A 188-amino-acid polypeptide reads, in one-letter code: Phosphoribosylglycinamide formyltransferase (188 aa).

12–14 (GSN) contributes to the N(1)-(5-phospho-beta-D-ribosyl)glycinamide binding site. (6R)-10-formyltetrahydrofolate contacts are provided by residues K66, 91-94 (MRLI), and N108. Residue H110 is the Proton donor of the active site.

Belongs to the GART family.

The enzyme catalyses N(1)-(5-phospho-beta-D-ribosyl)glycinamide + (6R)-10-formyltetrahydrofolate = N(2)-formyl-N(1)-(5-phospho-beta-D-ribosyl)glycinamide + (6S)-5,6,7,8-tetrahydrofolate + H(+). It functions in the pathway purine metabolism; IMP biosynthesis via de novo pathway; N(2)-formyl-N(1)-(5-phospho-D-ribosyl)glycinamide from N(1)-(5-phospho-D-ribosyl)glycinamide (10-formyl THF route): step 1/1. Catalyzes the transfer of a formyl group from 10-formyltetrahydrofolate to 5-phospho-ribosyl-glycinamide (GAR), producing 5-phospho-ribosyl-N-formylglycinamide (FGAR) and tetrahydrofolate. This chain is Phosphoribosylglycinamide formyltransferase, found in Staphylococcus aureus (strain Mu50 / ATCC 700699).